Consider the following 289-residue polypeptide: MEEMIEPLDRVFLQLGPFTIYWYGVLIGLGVIIGYVMASRESVRRGMPKDTFSDFVMYVIPVAIIFARLYYVIFRWEQYADDPIRVFYIWEGGLAIHGALIGGVLTAYILTKKRQLSFWQLMDVAAPSILIGQAIGRWGNFMNQEVYGGPVTREFLEGLMLPEFIINQMYINGTYYHPTFLYESIWNFIGVVVLLLLRRVNLRRGELFFSYLIWYSIGRFFIEGMRLDNLMIGDSLRTAQIVSILLIVGALLLWWYRRAKGLATERYLDPHQPARTNGNKKKTKKKKKK.

The next 4 membrane-spanning stretches (helical) occupy residues 18-38, 54-74, 86-106, and 116-136; these read FTIY…YVMA, DFVM…YVIF, VFYI…GVLT, and LSFW…QAIG. R137 contributes to the a 1,2-diacyl-sn-glycero-3-phospho-(1'-sn-glycerol) binding site. Transmembrane regions (helical) follow at residues 177-197, 205-225, and 236-256; these read HPTF…LLLL, GELF…IEGM, and LRTA…LWWY.

This sequence belongs to the Lgt family.

Its subcellular location is the cell membrane. It carries out the reaction L-cysteinyl-[prolipoprotein] + a 1,2-diacyl-sn-glycero-3-phospho-(1'-sn-glycerol) = an S-1,2-diacyl-sn-glyceryl-L-cysteinyl-[prolipoprotein] + sn-glycerol 1-phosphate + H(+). Its pathway is protein modification; lipoprotein biosynthesis (diacylglyceryl transfer). Its function is as follows. Catalyzes the transfer of the diacylglyceryl group from phosphatidylglycerol to the sulfhydryl group of the N-terminal cysteine of a prolipoprotein, the first step in the formation of mature lipoproteins. The chain is Phosphatidylglycerol--prolipoprotein diacylglyceryl transferase from Halalkalibacterium halodurans (strain ATCC BAA-125 / DSM 18197 / FERM 7344 / JCM 9153 / C-125) (Bacillus halodurans).